The following is a 343-amino-acid chain: Dihydroorotase (343 aa).

The Zn(2+) site is built by His-13 and His-15. Residues 15-17 (HLR) and Asn-41 each bind substrate. Residues Lys-99, His-136, and His-174 each contribute to the Zn(2+) site. N6-carboxylysine is present on Lys-99. Position 136 (His-136) interacts with substrate. Substrate is bound at residue Leu-219. A Zn(2+)-binding site is contributed by Asp-247. The active site involves Asp-247. Residues His-251 and Ala-263 each contribute to the substrate site.

It belongs to the metallo-dependent hydrolases superfamily. DHOase family. Class II DHOase subfamily. Homodimer. Zn(2+) serves as cofactor.

The catalysed reaction is (S)-dihydroorotate + H2O = N-carbamoyl-L-aspartate + H(+). The protein operates within pyrimidine metabolism; UMP biosynthesis via de novo pathway; (S)-dihydroorotate from bicarbonate: step 3/3. Its function is as follows. Catalyzes the reversible cyclization of carbamoyl aspartate to dihydroorotate. This is Dihydroorotase from Shewanella baltica (strain OS223).